A 412-amino-acid chain; its full sequence is Multifunctional CCA protein (412 aa).

2 residues coordinate ATP: G8 and R11. 2 residues coordinate CTP: G8 and R11. Residues D21 and D23 each contribute to the Mg(2+) site. Residues R91, R137, and R140 each coordinate ATP. The CTP site is built by R91, R137, and R140. Residues 226–327 (TGEHVLMVVE…VKVLERCDAL (102 aa)) enclose the HD domain.

Belongs to the tRNA nucleotidyltransferase/poly(A) polymerase family. Bacterial CCA-adding enzyme type 1 subfamily. As to quaternary structure, monomer. Can also form homodimers and oligomers. The cofactor is Mg(2+). Requires Ni(2+) as cofactor.

It carries out the reaction a tRNA precursor + 2 CTP + ATP = a tRNA with a 3' CCA end + 3 diphosphate. It catalyses the reaction a tRNA with a 3' CCA end + 2 CTP + ATP = a tRNA with a 3' CCACCA end + 3 diphosphate. In terms of biological role, catalyzes the addition and repair of the essential 3'-terminal CCA sequence in tRNAs without using a nucleic acid template. Adds these three nucleotides in the order of C, C, and A to the tRNA nucleotide-73, using CTP and ATP as substrates and producing inorganic pyrophosphate. tRNA 3'-terminal CCA addition is required both for tRNA processing and repair. Also involved in tRNA surveillance by mediating tandem CCA addition to generate a CCACCA at the 3' terminus of unstable tRNAs. While stable tRNAs receive only 3'-terminal CCA, unstable tRNAs are marked with CCACCA and rapidly degraded. The chain is Multifunctional CCA protein from Azoarcus sp. (strain BH72).